Reading from the N-terminus, the 128-residue chain is Glycophorin-C (128 aa).

Residues 1-12 are compositionally biased toward polar residues; that stretch reads MWSTRSPNSTAW. The segment at 1 to 48 is disordered; the sequence is MWSTRSPNSTAWPLSLEPDPGMASASTTMHTTTIAEPDPGMSGWPDGR. The Extracellular portion of the chain corresponds to 1–57; sequence MWSTRSPNSTAWPLSLEPDPGMASASTTMHTTTIAEPDPGMSGWPDGRMETSTPTIM. O-linked (GalNAc...) serine glycosylation is present at Ser-3. O-linked (GalNAc...) threonine glycosylation is present at Thr-4. A glycan (O-linked (GalNAc...) serine) is linked at Ser-6. The N-linked (GlcNAc...) asparagine glycan is linked to Asn-8. Ser-9 carries O-linked (GalNAc...) serine glycosylation. O-linked (GalNAc...) threonine glycosylation is present at Thr-10. O-linked (GalNAc...) serine glycans are attached at residues Ser-15, Ser-24, and Ser-26. Low complexity predominate over residues 22 to 33; the sequence is MASASTTMHTTT. O-linked (GalNAc...) threonine glycosylation is found at Thr-27, Thr-28, Thr-31, Thr-32, and Thr-33. The O-linked (GalNAc...) serine glycan is linked to Ser-42. Residues 58-81 traverse the membrane as a helical; Signal-anchor for type III membrane protein segment; the sequence is DIVVIAGVIAAVAIVLVSLLFVML. Residues 82–128 are Cytoplasmic-facing; the sequence is RYMYRHKGTYHTNEAKGTEFAESADAALQGDPALQDAGDSSRKEYFI. 2 positions are modified to phosphoserine: Ser-104 and Ser-122. The disordered stretch occupies residues 108–128; that stretch reads ALQGDPALQDAGDSSRKEYFI.

This sequence belongs to the glycophorin-C family. In terms of processing, O-glycosylated with core 1 or possibly core 8 glycans. As to expression, glycophorin-C is expressed in erythrocytes. Glycophorin-D and IsoGPC are ubiquitously expressed.

It localises to the cell membrane. In terms of biological role, this protein is a minor sialoglycoprotein in human erythrocyte membranes. The blood group Gerbich antigens and receptors for Plasmodium falciparum merozoites are most likely located within the extracellular domain. Glycophorin-C plays an important role in regulating the stability of red cells. The sequence is that of Glycophorin-C (GYPC) from Homo sapiens (Human).